Here is a 382-residue protein sequence, read N- to C-terminus: Heme A synthase (382 aa).

8 helical membrane passes run 25-45 (GAVR…VAVG), 112-132 (LLGR…WARG), 141-161 (GLLG…IMVA), 176-196 (LALH…LAAG), 211-231 (VVAC…GLVA), 270-290 (LALV…VAIA), 303-323 (AAAG…GLGI), and 327-347 (LLHV…AVLI). Position 277 (H277) interacts with heme. H338 contributes to the heme binding site.

This sequence belongs to the COX15/CtaA family. Type 2 subfamily. In terms of assembly, interacts with CtaB. Heme b serves as cofactor.

The protein resides in the cell membrane. It catalyses the reaction Fe(II)-heme o + 2 A + H2O = Fe(II)-heme a + 2 AH2. Its pathway is porphyrin-containing compound metabolism; heme A biosynthesis; heme A from heme O: step 1/1. Catalyzes the conversion of heme O to heme A by two successive hydroxylations of the methyl group at C8. The first hydroxylation forms heme I, the second hydroxylation results in an unstable dihydroxymethyl group, which spontaneously dehydrates, resulting in the formyl group of heme A. In Methylorubrum extorquens (strain CM4 / NCIMB 13688) (Methylobacterium extorquens), this protein is Heme A synthase.